The primary structure comprises 547 residues: Membrane protein insertase YidC (547 aa).

Residues 8-28 traverse the membrane as a helical segment; sequence LRLILAIALSFLFIALYSYFF. A compositionally biased stretch (low complexity) spans 37-50; it reads QTTKQETTNNHTAT. Residues 37-62 are disordered; that stretch reads QTTKQETTNNHTATSPNAPNAQHFST. A compositionally biased stretch (polar residues) spans 51 to 62; the sequence is SPNAPNAQHFST. 5 helical membrane-spanning segments follow: residues 325–345, 348–368, 414–434, 449–469, and 495–515; these read VIEY…LDYL, FVGN…IILY, GANP…FFAI, WILW…PLLM, and LLPL…VLYW.

This sequence belongs to the OXA1/ALB3/YidC family. Type 1 subfamily. Interacts with the Sec translocase complex via SecD. Specifically interacts with transmembrane segments of nascent integral membrane proteins during membrane integration.

It localises to the cell inner membrane. Functionally, required for the insertion and/or proper folding and/or complex formation of integral membrane proteins into the membrane. Involved in integration of membrane proteins that insert both dependently and independently of the Sec translocase complex, as well as at least some lipoproteins. Aids folding of multispanning membrane proteins. The sequence is that of Membrane protein insertase YidC from Helicobacter pylori (strain ATCC 700392 / 26695) (Campylobacter pylori).